The primary structure comprises 494 residues: Sugiol synthase (494 aa).

Residues 3-23 (SFSLLAALFFISAATWFISSR) form a helical membrane-spanning segment. Cysteine 437 serves as a coordination point for heme.

This sequence belongs to the cytochrome P450 family. Heme is required as a cofactor. In terms of tissue distribution, expressed in roots.

It localises to the membrane. The enzyme catalyses ferruginol + 2 reduced [NADPH--hemoprotein reductase] + 2 O2 = sugiol + 2 oxidized [NADPH--hemoprotein reductase] + 3 H2O + 2 H(+). It catalyses the reaction ferruginol + reduced [NADPH--hemoprotein reductase] + O2 = 11-hydroxyferruginol + oxidized [NADPH--hemoprotein reductase] + H2O + H(+). The catalysed reaction is 11-hydroxyferruginol + 2 reduced [NADPH--hemoprotein reductase] + 2 O2 = 11-hydroxysugiol + 2 oxidized [NADPH--hemoprotein reductase] + 3 H2O + 2 H(+). It participates in secondary metabolite biosynthesis; terpenoid biosynthesis. Functionally, monooxygenase that oxidizes ferruginol to produce sugiol. Oxidizes ferruginol at C-12 to produce 11-hydroxyferruginol. Can oxidize 11-hydroxyferruginol to 11-hydroxysugiol. These products are intermediates in tanshinone biosynthesis. This Salvia miltiorrhiza (Chinese sage) protein is Sugiol synthase.